The sequence spans 660 residues: MDALVAHCSARLLQQEKEIKFLTAEVDRLKNYSCSEASADLEKLREENLKLKYRLNILRKSLQAERNKPTKTMININSCLEEVFGCAIKAAYPVLENPPLIVTPSQQPKFGDYQCNSAMGICQMLKTKEQKVNPREIAENIVKHLPDNEYIEKVEIAGPGFINIHLRKGFVSQQLTNLLVNGVKIPSIGENKKVIVDFSSPNIAKEMHVGHLRSTIIGESMCRLFEFAGYNVLRLNHVGDWGTQFGMLIAHLQDKFPDYLTVSPPIGDLQAFYKESKKRFDTEEEFKKRAYQCVVLLQSKNPDIIKAWKLICDVSRQEFNKIYEALDISLIERGESFYQDRMHDIVKEFEDRGFVQVDDGRKIVFVPGCSVPLTIVKSDGGYTYDTSDLAAIKQRLFEEKADMIIYVVDNGQSLHFQTVFGAAQMIGWYDPAVTRVSHAGFGVVLGEDKKKFKTRSGETVRLIDLLEEGLKRSMDKLKEKERDKVLTTEELKAAQTSVAYGCIKYADLSHNRLNDYIFSFDKMLDDRGNTAAYLLYAFTRIRSIARLANIDEEMLRKAAHETEIILDHEKEWKLGRCILRFPEVLQKILDDLLLHTLCDYIYELATTFTEFYDSCYCVEKDRQSGEVLKVNMWRMLLCEAVAAVMAKGFDILGIKPVQRM.

An N-acetylmethionine modification is found at M1. The could be involved in the assembly of the multisynthetase complex stretch occupies residues 1-72; the sequence is MDALVAHCSA…QAERNKPTKT (72 aa). L-arginine is bound by residues 200 to 202, H211, Y384, D388, and Q412; that span reads SPN. Positions 201-212 match the 'HIGH' region motif; sequence PNIAKEMHVGHL. The segment at 529-543 is interaction with tRNA; sequence NTAAYLLYAFTRIRS.

The protein belongs to the class-I aminoacyl-tRNA synthetase family. As to quaternary structure, interacts (via N-terminus) with AIMP1 (via N-terminus); this stimulates its catalytic activity. Interacts (via N-terminus) with LARS2 (via C-terminus). Monomer. Part of a multisubunit complex that groups tRNA ligases for Arg (RARS1), Asp (DARS1), Gln (QARS1), Ile (IARS1), Leu (LARS1), Lys (KARS1), Met (MARS1) the bifunctional ligase for Glu and Pro (EPRS1) and the auxiliary subunits AIMP1/p43, AIMP2/p38 and EEF1E1/p18. Interacts with QARS1. Part of a complex composed of RARS1, QARS1 and AIMP1.

The protein localises to the cytoplasm. It is found in the cytosol. It carries out the reaction tRNA(Arg) + L-arginine + ATP = L-arginyl-tRNA(Arg) + AMP + diphosphate. Its function is as follows. Forms part of a macromolecular complex that catalyzes the attachment of specific amino acids to cognate tRNAs during protein synthesis. Modulates the secretion of AIMP1 and may be involved in generation of the inflammatory cytokine EMAP2 from AIMP1. The polypeptide is Arginine--tRNA ligase, cytoplasmic (RARS1) (Bos taurus (Bovine)).